The primary structure comprises 75 residues: UPF0291 protein lin1342 (75 aa).

The interval 55-75 (IDPKGNDVTPHKIKQMRKNKK) is disordered. A compositionally biased stretch (basic residues) spans 65-75 (HKIKQMRKNKK).

This sequence belongs to the UPF0291 family.

The protein resides in the cytoplasm. This Listeria innocua serovar 6a (strain ATCC BAA-680 / CLIP 11262) protein is UPF0291 protein lin1342.